The primary structure comprises 224 residues: Cytidylate kinase (224 aa).

11–19 (GPASAGKST) provides a ligand contact to ATP.

This sequence belongs to the cytidylate kinase family. Type 1 subfamily.

It is found in the cytoplasm. The enzyme catalyses CMP + ATP = CDP + ADP. It catalyses the reaction dCMP + ATP = dCDP + ADP. The sequence is that of Cytidylate kinase from Ligilactobacillus salivarius (strain UCC118) (Lactobacillus salivarius).